The chain runs to 124 residues: Photoactive yellow protein (124 aa).

The 64-residue stretch at 22–85 folds into the PAS domain; the sequence is AESLPFGAVL…GEFLKFNRTG (64 aa). The residue at position 68 (C68) is an S-(4-hydroxycinnamyl)cysteine.

The protein belongs to the photoactive yellow protein family. The 4-hydroxycinnamic acid (p-coumaric acid) chromophore is covalently bound via a thioester linkage.

This photoactive protein is a photoreceptor with kinetics similar to that of rhodopsin. The chain is Photoactive yellow protein (pyp) from Rhodobacter capsulatus (strain ATCC BAA-309 / NBRC 16581 / SB1003).